The following is a 148-amino-acid chain: MKVELKILNKELIKELPGYATEGSAAIDLRACISESIYLKSGECKLVATGIAINIANPNYAAMILPRSGLGHKKGLVLGNGTGLIDSDYQGELMVSCFNRSQETIEIEPLMRFAQLVIVPVVQANFEIVEDFSQQSVRATGGFGHTGV.

Substrate-binding positions include 67–69, asparagine 80, 84–86, and methionine 94; these read RSG and LID.

Belongs to the dUTPase family. Requires Mg(2+) as cofactor.

The catalysed reaction is dUTP + H2O = dUMP + diphosphate + H(+). Its pathway is pyrimidine metabolism; dUMP biosynthesis; dUMP from dCTP (dUTP route): step 2/2. Functionally, this enzyme is involved in nucleotide metabolism: it produces dUMP, the immediate precursor of thymidine nucleotides and it decreases the intracellular concentration of dUTP so that uracil cannot be incorporated into DNA. This is Deoxyuridine 5'-triphosphate nucleotidohydrolase from Francisella tularensis subsp. tularensis (strain FSC 198).